Reading from the N-terminus, the 578-residue chain is Triokinase/FMN cyclase (578 aa).

The DhaK domain maps to 9–336 (SVEGCADDAL…IDAETTAKAW (328 aa)). Dihydroxyacetone-binding positions include 56–59 (GSGH), Lys-109, and Asp-114. His-221 (tele-hemiaminal-histidine intermediate) is an active-site residue. The DhaL domain maps to 372 to 571 (KQMALVLDRI…AAAIFRAILE (200 aa)). ATP is bound by residues 401 to 404 (DGDC), 446 to 447 (SS), Gly-486, and 494 to 495 (TM). A phosphoserine mark is found at Ser-511 and Ser-545. 556-558 (DPG) is a binding site for ATP.

Belongs to the dihydroxyacetone kinase (DAK) family. Homodimer. Interacts with IFIH1 (via the CARD domains), the interaction is inhibited by viral infection. It depends on Mg(2+) as a cofactor. The cofactor is Mn(2+). Co(2+) is required as a cofactor.

It carries out the reaction dihydroxyacetone + ATP = dihydroxyacetone phosphate + ADP + H(+). The catalysed reaction is D-glyceraldehyde + ATP = D-glyceraldehyde 3-phosphate + ADP + H(+). The enzyme catalyses FAD = riboflavin cyclic-4',5'-phosphate + AMP + H(+). Each activity is inhibited by the substrate(s) of the other. Its function is as follows. Catalyzes both the phosphorylation of dihydroxyacetone and of glyceraldehyde, and the splitting of ribonucleoside diphosphate-X compounds among which FAD is the best substrate. Represses IFIH1-mediated cellular antiviral response. This chain is Triokinase/FMN cyclase, found in Mus musculus (Mouse).